Reading from the N-terminus, the 744-residue chain is Leucine-rich repeat extensin-like protein 1 (744 aa).

The signal sequence occupies residues 1-26 (MLFPPLRSLFLFTLLLSSVCFLQIKA). Residues N71 and N77 are each glycosylated (N-linked (GlcNAc...) asparagine). 9 LRR repeats span residues 122–145 (LSDL…TFNR), 147–170 (KLLY…VLSL), 171–194 (PSLK…LFDR), 196–217 (LDAI…MGNS), 219–240 (VSAL…IGQM), 241–265 (GKTL…IGNL), 266–289 (KKVT…VGNM), 290–313 (KSLE…ICQL), and 315–336 (NLEN…CAAS). N253 carries an N-linked (GlcNAc...) asparagine glycan. Residues N318 and N344 are each glycosylated (N-linked (GlcNAc...) asparagine). The stretch at 381–404 (FSPPPPTFKMSPEVRTLPPPIYVY) is one LRR 10 repeat. A contains the Ser-Pro(4) repeats region spans residues 382–744 (SPPPPTFKMS…ASPPPPPSYY (363 aa)). Disordered regions lie at residues 408–445 (PPPP…PPPP), 518–537 (VYSS…PESS), 555–576 (PSPV…VYYP), and 658–744 (PPPS…PSYY). Positions 430 to 439 (SKMSPSVRAY) are enriched in low complexity. Positions 704–729 (YEPPPEYSYSSSPPPPSPTSYFPPMP) are enriched in pro residues.

In terms of processing, hydroxylated on proline residues in the S-P-P-P-P repeat. Post-translationally, O-glycosylated on hydroxyprolines. In terms of tissue distribution, expressed in root hair cells (at protein level).

It localises to the secreted. It is found in the cell wall. Modulates cell morphogenesis by regulating cell wall formation and assembly, and/or growth polarization. Together with LRX2, component of the extracellular mechanism regulating root hair morphogenesis and elongation. In Arabidopsis thaliana (Mouse-ear cress), this protein is Leucine-rich repeat extensin-like protein 1 (LRX1).